Here is a 263-residue protein sequence, read N- to C-terminus: Chromosomal replication initiator protein DnaA (263 aa).

A region of interest (domain I, interacts with DnaA modulators) is located at residue Glu1. Glu1 is a region of interest (domain II). Residues 1-179 are domain III, AAA+ region; that stretch reads ESGMGKTHLL…GSVSRLNFWS (179 aa). Positions 3, 5, 6, and 7 each coordinate ATP. Positions 180–263 are domain IV, binds dsDNA; the sequence is QQNPEEKIIT…HTLAQIGEEF (84 aa).

The protein belongs to the DnaA family. As to quaternary structure, oligomerizes as a right-handed, spiral filament on DNA at oriC.

It localises to the cytoplasm. In terms of biological role, plays an essential role in the initiation and regulation of chromosomal replication. ATP-DnaA binds to the origin of replication (oriC) to initiate formation of the DNA replication initiation complex once per cell cycle. Binds the DnaA box (a 9 base pair repeat at the origin) and separates the double-stranded (ds)DNA. Forms a right-handed helical filament on oriC DNA; dsDNA binds to the exterior of the filament while single-stranded (ss)DNA is stabiized in the filament's interior. The ATP-DnaA-oriC complex binds and stabilizes one strand of the AT-rich DNA unwinding element (DUE), permitting loading of DNA polymerase. After initiation quickly degrades to an ADP-DnaA complex that is not apt for DNA replication. Binds acidic phospholipids. This Mycoplasma mycoides protein is Chromosomal replication initiator protein DnaA.